Reading from the N-terminus, the 489-residue chain is Lysine-specific permease LysP (489 aa).

At valine 2–leucine 22 the chain is on the cytoplasmic side. The helical transmembrane segment at threonine 23–isoleucine 43 threads the bilayer. Residues serine 44–glutamine 45 lie on the Periplasmic side of the membrane. The helical transmembrane segment at alanine 46 to methionine 66 threads the bilayer. The Cytoplasmic segment spans residues threonine 67–asparagine 105. A helical membrane pass occupies residues tryptophan 106–proline 126. The Periplasmic segment spans residues aspartate 127–threonine 128. A helical membrane pass occupies residues proline 129–valine 149. The Cytoplasmic segment spans residues arginine 150 to leucine 161. A helical transmembrane segment spans residues isoleucine 162 to phenylalanine 182. Residues lysine 183–glutamate 197 lie on the Periplasmic side of the membrane. Residues alanine 198–phenylalanine 218 traverse the membrane as a helical segment. Residues glutamine 219–glutamine 244 lie on the Cytoplasmic side of the membrane. The chain crosses the membrane as a helical span at residues valine 245–proline 265. Over tyrosine 266 to histidine 290 the chain is Periplasmic. Residues alanine 291–alanine 311 form a helical membrane-spanning segment. Residues glycine 312 to arginine 346 lie on the Cytoplasmic side of the membrane. Residues asparagine 347–asparagine 367 traverse the membrane as a helical segment. At glutamine 368 to valine 370 the chain is on the periplasmic side. Residues tyrosine 371–isoleucine 391 traverse the membrane as a helical segment. Residues serine 392–arginine 413 are Cytoplasmic-facing. A helical membrane pass occupies residues serine 414 to glycine 434. Topologically, residues glutamine 435–aspartate 446 are periplasmic. A helical transmembrane segment spans residues tryptophan 447–tyrosine 467. Residues lysine 468–lysine 489 lie on the Cytoplasmic side of the membrane.

This sequence belongs to the amino acid-polyamine-organocation (APC) superfamily. Amino acid transporter (AAT) (TC 2.A.3.1) family. Interacts strongly with the transcriptional activator CadC in the absence of lysine or at low lysine concentrations. Interaction is markedly attenuated under increasing lysine levels. Concomitant pH-dependent protonation of periplasmic amino acids in both proteins dissolves their electrostatic connections resulting in further destabilization of the CadC/LysP interaction. Low pH promotes oligomerization of LysP.

It is found in the cell inner membrane. It carries out the reaction L-lysine(out) + H(+)(out) = L-lysine(in) + H(+)(in). Permease involved in lysine uptake. In addition, functions as a lysine sensor that mediates the lysine-dependent regulation of the transcriptional activator CadC. In the absence of lysine, or at low lysine concentrations, LysP inhibits CadC by an interaction with the transmembrane domain of CadC. In the presence of lysine, LysP loses its ability to interact with and inhibit CadC, and acts as a lysine permease. In Escherichia coli (strain K12), this protein is Lysine-specific permease LysP.